A 422-amino-acid chain; its full sequence is L-threonine dehydratase biosynthetic IlvA (422 aa).

Lys56 carries the post-translational modification N6-(pyridoxal phosphate)lysine. Residues Asn83, 189–193 (GGGGL), and Ser315 each bind pyridoxal 5'-phosphate. The ACT-like domain occupies 339 to 413 (HYFILNFPQR…FDKSNIYINE (75 aa)).

This sequence belongs to the serine/threonine dehydratase family. As to quaternary structure, homotetramer. The cofactor is pyridoxal 5'-phosphate.

The catalysed reaction is L-threonine = 2-oxobutanoate + NH4(+). The protein operates within amino-acid biosynthesis; L-isoleucine biosynthesis; 2-oxobutanoate from L-threonine: step 1/1. In terms of biological role, catalyzes the anaerobic formation of alpha-ketobutyrate and ammonia from threonine in a two-step reaction. The first step involved a dehydration of threonine and a production of enamine intermediates (aminocrotonate), which tautomerizes to its imine form (iminobutyrate). Both intermediates are unstable and short-lived. The second step is the nonenzymatic hydrolysis of the enamine/imine intermediates to form 2-ketobutyrate and free ammonia. In the low water environment of the cell, the second step is accelerated by RidA. In Staphylococcus saprophyticus subsp. saprophyticus (strain ATCC 15305 / DSM 20229 / NCIMB 8711 / NCTC 7292 / S-41), this protein is L-threonine dehydratase biosynthetic IlvA (ilvA).